The sequence spans 443 residues: Mitochondrial enolase superfamily member 1 (443 aa).

Substrate is bound by residues 24-26 (GSD) and tyrosine 34. Serine 148 is subject to Phosphoserine. Position 220 (lysine 220) interacts with substrate. The active-site Proton donor/acceptor is the lysine 222. Aspartate 250 contacts Mg(2+). Substrate contacts are provided by residues asparagine 252, glutamate 276, glutamate 305, 355–357 (HAG), and glutamate 386. 2 residues coordinate Mg(2+): glutamate 276 and glutamate 305. Histidine 355 is an active-site residue.

It belongs to the mandelate racemase/muconate lactonizing enzyme family. ENOSF1 subfamily. It depends on Mg(2+) as a cofactor. Could be sumoylated.

Its subcellular location is the mitochondrion. It carries out the reaction L-fuconate = 2-dehydro-3-deoxy-L-fuconate + H2O. In terms of biological role, plays a role in the catabolism of L-fucose, a sugar that is part of the carbohydrates that are attached to cellular glycoproteins. Catalyzes the dehydration of L-fuconate to 2-keto-3-deoxy-L-fuconate by the abstraction of the 2-proton to generate an enediolate intermediate that is stabilized by the magnesium ion. May down-regulate thymidylate synthase activity, possibly already at the RNA level, by promoting the degradation of TYMS mRNA via an antisense RNA-based mechanism. This Bos taurus (Bovine) protein is Mitochondrial enolase superfamily member 1 (ENOSF1).